We begin with the raw amino-acid sequence, 204 residues long: Vacuolar protein-sorting-associated protein 46 (204 aa).

An interaction with VSP24 region spans residues methionine 1–methionine 103. Serine 5 is modified (phosphoserine). 2 coiled-coil regions span residues leucine 9 to alanine 56 and asparagine 109 to leucine 129. The segment at aspartate 104 to glycine 204 is interaction with VSP4. The interaction with VTA1 stretch occupies residues asparagine 176–glycine 204. Basic and acidic residues predominate over residues valine 185–alanine 196. Residues valine 185–glycine 204 form a disordered region.

It belongs to the SNF7 family. In terms of assembly, self-associates. Interacts with VPS4 and VTA1. Interacts with IST1.

It localises to the endosome membrane. It is found in the endomembrane system. In terms of biological role, class E VPS protein implicated in concentration and sorting of cargo proteins of the multivesicular body (MVB) for incorporation into intralumenal vesicles. The lumenal sequestrated membrane proteins will be targeted into the vacuole after fusion of the endosome with the vacuole. Probably acts as a peripherally associated component of the ESCRT-III complex, which appears to be critical for late steps in MVB sorting, such as membrane invagination and final cargo sorting and recruits late-acting components of the sorting machinery. The MVB pathway requires the sequential function of ESCRT-O, -I,-II and -III complex assemblies. Regulates the membrane association of VPS4. Can stimulate VPS4 ATPase activity directly or via VTA1. The polypeptide is Vacuolar protein-sorting-associated protein 46 (DID2) (Saccharomyces cerevisiae (strain ATCC 204508 / S288c) (Baker's yeast)).